A 360-amino-acid polypeptide reads, in one-letter code: Chorismate synthase (360 aa).

Positions 48 and 54 each coordinate NADP(+). Residues 125 to 127, 246 to 247, G286, 301 to 305, and R327 contribute to the FMN site; these read RSS, NA, and KPTSS.

It belongs to the chorismate synthase family. In terms of assembly, homotetramer. It depends on FMNH2 as a cofactor.

It carries out the reaction 5-O-(1-carboxyvinyl)-3-phosphoshikimate = chorismate + phosphate. It functions in the pathway metabolic intermediate biosynthesis; chorismate biosynthesis; chorismate from D-erythrose 4-phosphate and phosphoenolpyruvate: step 7/7. Catalyzes the anti-1,4-elimination of the C-3 phosphate and the C-6 proR hydrogen from 5-enolpyruvylshikimate-3-phosphate (EPSP) to yield chorismate, which is the branch point compound that serves as the starting substrate for the three terminal pathways of aromatic amino acid biosynthesis. This reaction introduces a second double bond into the aromatic ring system. The sequence is that of Chorismate synthase from Haemophilus ducreyi (strain 35000HP / ATCC 700724).